The sequence spans 529 residues: Bifunctional purine biosynthesis protein PurH (529 aa).

An MGS-like domain is found at 1 to 148; the sequence is MQPPRPVRRA…KNHKDVAIVV (148 aa).

Belongs to the PurH family.

The catalysed reaction is (6R)-10-formyltetrahydrofolate + 5-amino-1-(5-phospho-beta-D-ribosyl)imidazole-4-carboxamide = 5-formamido-1-(5-phospho-D-ribosyl)imidazole-4-carboxamide + (6S)-5,6,7,8-tetrahydrofolate. The enzyme catalyses IMP + H2O = 5-formamido-1-(5-phospho-D-ribosyl)imidazole-4-carboxamide. It functions in the pathway purine metabolism; IMP biosynthesis via de novo pathway; 5-formamido-1-(5-phospho-D-ribosyl)imidazole-4-carboxamide from 5-amino-1-(5-phospho-D-ribosyl)imidazole-4-carboxamide (10-formyl THF route): step 1/1. It participates in purine metabolism; IMP biosynthesis via de novo pathway; IMP from 5-formamido-1-(5-phospho-D-ribosyl)imidazole-4-carboxamide: step 1/1. This is Bifunctional purine biosynthesis protein PurH from Sodalis glossinidius (strain morsitans).